We begin with the raw amino-acid sequence, 453 residues long: Membrane-bound acylglycerophosphatidylinositol O-acyltransferase mboa-7 (453 aa).

Transmembrane regions (helical) follow at residues I4–G24, I36–V56, L79–L99, A154–I174, V195–I215, A220–F240, and V244–P264. N319 carries an N-linked (GlcNAc...) asparagine glycan. The active site involves H350. The next 2 membrane-spanning stretches (helical) occupy residues A354–F374 and F421–A441.

It belongs to the membrane-bound acyltransferase family. As to expression, expressed ubiquitously throughout development from early embryo to larval and adult stages. In adults, strongly expressed in pharyngeal muscle, body wall muscle, vulval cells, distal tip cells, intestinal cells and spermatheca.

The protein localises to the membrane. It carries out the reaction 1-octadecanoyl-sn-glycero-3-phospho-(1D-myo-inositol) + (5Z,8Z,11Z,14Z,17Z)-eicosapentaenoyl-CoA = 1-octadecanoyl-2-(5Z,8Z,11Z,14Z,17Z-eicosapentaenoyl)-sn-glycero-3-phospho-(1D-myo-inositol) + CoA. The enzyme catalyses a 1-acyl-sn-glycero-3-phospho-(1D-myo-inositol) + (5Z,8Z,11Z,14Z,17Z)-eicosapentaenoyl-CoA = a 1-acyl-2-(5Z,8Z,11Z,14Z,17Z-eicosapentaenoyl)-sn-glycero-3-phospho-(1D-myo-inositol) + CoA. The catalysed reaction is a 1-acyl-sn-glycero-3-phospho-(1D-myo-inositol) + (5Z,8Z,11Z,14Z)-eicosatetraenoyl-CoA = a 1-acyl-2-(5Z,8Z,11Z,14Z-eicosatetraenoyl)-sn-glycero-3-phospho-(1D-myo-inositol) + CoA. It participates in lipid metabolism; phospholipid metabolism. Acyltransferase which mediates the conversion of lysophosphatidylinositol (1-acyl-sn-glycero-3-phosphatidylinositol or LPI) into phosphatidylinositol (1,2-diacyl-sn-glycero-3-phosphoinositol or PI) (LPIAT activity). Prefers sn-2-LPI rather than sn-1-LPI as the acyl acceptor. Lysophospholipid acyltransferases (LPLATs) catalyze the reacylation step of the phospholipid remodeling pathway also known as the Lands cycle. Involved in the selective incorporation of arachidonoyl-CoA ((5Z,8Z,11Z,14Z)-eicosatetraenoyl-CoA) and (5Z,8Z,11Z,14Z,17Z)-eicosapentaenoyl-CoA (EPA-CoA) into PI. Besides its role in biomembranes, PI is a precursor of PI 3-phosphate (PIP3) and its fatty acid composition has an important role in PI3P signaling. This is Membrane-bound acylglycerophosphatidylinositol O-acyltransferase mboa-7 from Caenorhabditis elegans.